The primary structure comprises 677 residues: Methionine--tRNA ligase (677 aa).

Residues 15-25 (PYANGSIHLGH) carry the 'HIGH' region motif. 4 residues coordinate Zn(2+): Cys-146, Cys-149, Cys-159, and Cys-162. A 'KMSKS' region motif is present at residues 333-337 (KMSKS). Lys-336 is a binding site for ATP. A tRNA-binding domain is found at 575–677 (DFAKVDLRVA…AGAKPGHQVK (103 aa)).

Belongs to the class-I aminoacyl-tRNA synthetase family. MetG type 1 subfamily. As to quaternary structure, homodimer. Zn(2+) serves as cofactor.

The protein localises to the cytoplasm. It carries out the reaction tRNA(Met) + L-methionine + ATP = L-methionyl-tRNA(Met) + AMP + diphosphate. In terms of biological role, is required not only for elongation of protein synthesis but also for the initiation of all mRNA translation through initiator tRNA(fMet) aminoacylation. This Shigella boydii serotype 18 (strain CDC 3083-94 / BS512) protein is Methionine--tRNA ligase.